Consider the following 197-residue polypeptide: Predicted GPI-anchored protein 34 (197 aa).

Residues M1–A20 form the signal peptide. Residues N110, N114, and N152 are each glycosylated (N-linked (GlcNAc...) asparagine). Residue G169 is the site of GPI-anchor amidated glycine attachment. Positions A170–L197 are cleaved as a propeptide — removed in mature form.

It localises to the cell membrane. In terms of biological role, predicted GPI-anchored protein which may have a role during host infection. This is Predicted GPI-anchored protein 34 (PGA34) from Candida albicans (strain SC5314 / ATCC MYA-2876) (Yeast).